We begin with the raw amino-acid sequence, 128 residues long: NADH-ubiquinone oxidoreductase chain 3 (128 aa).

The next 3 membrane-spanning stretches (helical) occupy residues 4 to 24 (FIIF…VNIL), 50 to 70 (LAFN…DLEI), and 86 to 106 (YGFT…VYEI).

The protein belongs to the complex I subunit 3 family. As to quaternary structure, complex I is composed of 37 different subunits.

The protein localises to the mitochondrion membrane. The catalysed reaction is a ubiquinone + NADH + 5 H(+)(in) = a ubiquinol + NAD(+) + 4 H(+)(out). In terms of biological role, core subunit of the mitochondrial membrane respiratory chain NADH dehydrogenase (Complex I) that is believed to belong to the minimal assembly required for catalysis. Complex I functions in the transfer of electrons from NADH to the respiratory chain. The immediate electron acceptor for the enzyme is believed to be ubiquinone. In Yarrowia lipolytica (strain CLIB 122 / E 150) (Yeast), this protein is NADH-ubiquinone oxidoreductase chain 3 (ND3).